Here is a 213-residue protein sequence, read N- to C-terminus: KDWNYFTFAQQWPIAVCAEHKSCFIPDSVVGWGIHGLWPSSDTESKGPENCNGSWPFDINNVMPLVPELKKYWPNLYPDTKANSFWEHEWSKHGTCATSLPATSNELKYFGMGLKLHAKYNISRILVNQGILPSKTAGYMINETEAAVKRELGVDAVIECVYDKEKTKKQLLYEISICLTKEFELISCNKKEVSETTCPRKEPFFYPPVHDNN.

H35 is an active-site residue. The cysteines at positions 51 and 96 are disulfide-linked. N-linked (GlcNAc...) asparagine glycosylation occurs at N52. Active-site residues include E89 and H93. Residues N121 and N142 are each glycosylated (N-linked (GlcNAc...) asparagine). Intrachain disulfides connect C160–C198 and C178–C188.

This sequence belongs to the RNase T2 family.

Its subcellular location is the secreted. Its function is as follows. Releases mononucleotides from RNA in the order of 3'-GMP, 3'-AMP and 3'-UMP. The protein is Ribonuclease Oy of Magallana gigas (Pacific oyster).